The following is a 242-amino-acid chain: Ribosomal RNA large subunit methyltransferase E (242 aa).

S-adenosyl-L-methionine is bound by residues G64, W66, D84, D100, and D125. Residue K165 is the Proton acceptor of the active site. The tract at residues S198–D242 is disordered. The segment covering G233–D242 has biased composition (polar residues).

This sequence belongs to the class I-like SAM-binding methyltransferase superfamily. RNA methyltransferase RlmE family.

It is found in the cytoplasm. The catalysed reaction is uridine(2552) in 23S rRNA + S-adenosyl-L-methionine = 2'-O-methyluridine(2552) in 23S rRNA + S-adenosyl-L-homocysteine + H(+). In terms of biological role, specifically methylates the uridine in position 2552 of 23S rRNA at the 2'-O position of the ribose in the fully assembled 50S ribosomal subunit. The polypeptide is Ribosomal RNA large subunit methyltransferase E (Verminephrobacter eiseniae (strain EF01-2)).